The sequence spans 607 residues: Fatty acid amide hydrolase (607 aa).

Active-site charge relay system residues include Lys205 and Ser281. 302-305 (GGGS) provides a ligand contact to substrate. The active-site Acyl-ester intermediate is Ser305.

It belongs to the amidase family. In terms of assembly, forms homodimers. Expressed in roots, leaves and flowers. Expressed in seedlings, flowers, roots, siliques, seeds and leaves.

Its subcellular location is the endoplasmic reticulum membrane. The protein localises to the cell membrane. The enzyme catalyses N-(5Z,8Z,11Z,14Z-eicosatetraenoyl)-ethanolamine + H2O = ethanolamine + (5Z,8Z,11Z,14Z)-eicosatetraenoate. It catalyses the reaction N-(9Z,12Z-octadecadienoyl)-ethanolamine + H2O = ethanolamine + (9Z,12Z)-octadecadienoate. The catalysed reaction is N-hexadecanoylethanolamine + H2O = ethanolamine + hexadecanoate. It carries out the reaction N-tetradecanoylethanolamine + H2O = tetradecanoate + ethanolamine. The enzyme catalyses N-dodecanoylethanolamine + H2O = dodecanoate + ethanolamine. With respect to regulation, inhibited by methyl arachidonyl fluorophosphonate (MAFP). In terms of biological role, catalyzes the hydrolysis of bioactive endogenous fatty acid amides to their corresponding acids. The hydrolysis of endogenous amidated lipids terminates their participation as lipid mediators in various signaling systems. Converts a wide range of N-acylethanolamines (NAEs) to their corresponding free fatty acids and ethanolamine. Can use oleamide as substrate, but not indole-3-acetamide, 1-naphtalene-acetamide, nicotinic acid amide or L-asparagine. Can use 2-arachidonylglycerol as substrate. Participates in the regulation of plant growth. Hydrolyzes N-dodecanoylethanolamine, which is has a growth inhibitory effect on seedling growth. Involved in plant defense signaling. Involved in abscisic acid (ABA) signaling through mechanisms that are independent of the catalytic activity. Involved in the regulation of flowering time. Catalyzes the hydrolysis of N-acyl L-homoserine lactones (AHLs), which are a class of signaling molecules produced by bacteria for quorum sensing. Accumulation of L-homoserine appears to encourage plant growth at low concentrations by stimulating transpiration, but higher concentrations inhibit growth by stimulating ethylene production. The sequence is that of Fatty acid amide hydrolase from Arabidopsis thaliana (Mouse-ear cress).